The sequence spans 377 residues: 5-hydroxytryptamine receptor 1D (377 aa).

N-linked (GlcNAc...) asparagine glycosylation is found at Asn-5, Asn-17, and Asn-21. 3 helical membrane passes run 39–64 (ISLA…TTIF), 76–97 (LIGS…ISIA), and 110–134 (LCDI…VIAL). Residues Cys-111 and Cys-188 are joined by a disulfide bond. 2 residues coordinate serotonin: Asp-118 and Cys-122. The DRY motif; important for ligand-induced conformation changes motif lies at 135-137 (DRY). Helical transmembrane passes span 155-176 (AAVM…PLFW), 195-218 (ISYT…ILYG), 301-326 (KTLG…VLPI), and 336-359 (ALFD…YTVF). A serotonin-binding site is contributed by Ser-321. Residues 352-356 (NPIIY) carry the NPxxY motif; important for ligand-induced conformation changes and signaling motif.

Belongs to the G-protein coupled receptor 1 family. Homodimer. Heterodimer with HTR1B.

It is found in the cell membrane. Its function is as follows. G-protein coupled receptor for 5-hydroxytryptamine (serotonin). Also functions as a receptor for ergot alkaloid derivatives, various anxiolytic and antidepressant drugs and other psychoactive substances. Ligand binding causes a conformation change that triggers signaling via guanine nucleotide-binding proteins (G proteins) and modulates the activity of downstream effectors, such as adenylate cyclase. HTR1D is coupled to G(i)/G(o) G alpha proteins and mediates inhibitory neurotransmission by inhibiting adenylate cyclase activity. Regulates the release of 5-hydroxytryptamine in the brain, and thereby affects neural activity. May also play a role in regulating the release of other neurotransmitters. May play a role in vasoconstriction. This Canis lupus familiaris (Dog) protein is 5-hydroxytryptamine receptor 1D (HTR1D).